A 223-amino-acid chain; its full sequence is Uracil-DNA glycosylase (223 aa).

Residue D67 is the Proton acceptor of the active site.

The protein belongs to the uracil-DNA glycosylase (UDG) superfamily. UNG family.

It localises to the cytoplasm. The enzyme catalyses Hydrolyzes single-stranded DNA or mismatched double-stranded DNA and polynucleotides, releasing free uracil.. Its function is as follows. Excises uracil residues from the DNA which can arise as a result of misincorporation of dUMP residues by DNA polymerase or due to deamination of cytosine. In Borreliella burgdorferi (strain ZS7) (Borrelia burgdorferi), this protein is Uracil-DNA glycosylase.